Consider the following 234-residue polypeptide: ATP synthase subunit delta, chloroplastic (234 aa).

Residues 1–47 (MASLQQTLFSLQSKLPPSSFQIARSLPLRKTFPIRINNGGNAAGARM) constitute a chloroplast transit peptide. Ser-48 is modified (N-acetylserine). Asn-66 carries N-linked (GlcNAc...) asparagine glycosylation. Thr-234 carries the post-translational modification Phosphothreonine.

This sequence belongs to the ATPase delta chain family. As to quaternary structure, F-type ATPases have 2 components, F(1) - the catalytic core - and F(0) - the membrane proton channel. F(1) has five subunits: alpha(3), beta(3), gamma(1), delta(1), epsilon(1). CF(0) has four main subunits: a(1), b(1), b'(1) and c(10-14). The alpha and beta chains form an alternating ring which encloses part of the gamma chain. F(1) is attached to F(0) by a central stalk formed by the gamma and epsilon chains, while a peripheral stalk is formed by the delta, b and b' chains.

The protein localises to the plastid. It localises to the chloroplast thylakoid membrane. Functionally, f(1)F(0) ATP synthase produces ATP from ADP in the presence of a proton or sodium gradient. F-type ATPases consist of two structural domains, F(1) containing the extramembraneous catalytic core and F(0) containing the membrane proton channel, linked together by a central stalk and a peripheral stalk. During catalysis, ATP synthesis in the catalytic domain of F(1) is coupled via a rotary mechanism of the central stalk subunits to proton translocation (Potential). Essential for photosynthesis, probably by facilitating electron transport in both photosystems I and II. In terms of biological role, this protein is part of the stalk that links CF(0) to CF(1). It either transmits conformational changes from CF(0) to CF(1) or is implicated in proton conduction. In Arabidopsis thaliana (Mouse-ear cress), this protein is ATP synthase subunit delta, chloroplastic.